Reading from the N-terminus, the 417-residue chain is Nucleosome assembly protein (417 aa).

The segment at 1–47 is disordered; sequence MSDPIRTKPKSSMQIDNAPTPHNTPASVLNPSYLKNGNPVRAQAQEQ. The span at 10–35 shows a compositional bias: polar residues; it reads KSSMQIDNAPTPHNTPASVLNPSYLK. Residues threonine 20 and threonine 24 each carry the phosphothreonine modification. A Phosphoserine modification is found at serine 27. Residue lysine 50 forms a Glycyl lysine isopeptide (Lys-Gly) (interchain with G-Cter in ubiquitin) linkage. The residue at position 53 (threonine 53) is a Phosphothreonine. Serine 69, serine 76, serine 82, serine 98, serine 104, and serine 140 each carry phosphoserine. Residues 143-362 form an interaction with NBA1 region; sequence EQPKPEQIAK…IPRAVDWFTG (220 aa). Residues serine 159 and serine 177 each carry the phosphoserine; by CK2 modification. Positions 330–356 form a DNA-binding region, H-T-H motif; that stretch reads LEEDLEERLALDYSIGEQLKDKLIPRA. A disordered region spans residues 364–417; it reads ALEFEFEEDEEEADEDEDEEEDDDHGLEDDDGESAEEQDDFAGRPEQAPECKQS. Over residues 367 to 403 the composition is skewed to acidic residues; that stretch reads FEFEEDEEEADEDEDEEEDDDHGLEDDDGESAEEQDD. The residue at position 397 (serine 397) is a Phosphoserine; by CK2. Residues 404-417 are compositionally biased toward basic and acidic residues; the sequence is FAGRPEQAPECKQS.

This sequence belongs to the nucleosome assembly protein (NAP) family. As to quaternary structure, component of the GIN4 complex composed of at least BNI5, CDC3, CDC10, CDC11, CDC12, GIN4, NAP1 and SHS1 which forms a ring at the bud neck. Homodimer (in-vitro). Interacts with the B-type cyclin CLB2. Interacts with 60S ribosomal protein L18 (RPL18A or RPL18B), CKA2, CKI1, eukaryotic elongation factor 1 complex eEF1A (TEF1 or TEF2), FOL1, HSC82, HTA2, HTB2, HTZ1, KAP114, KCC4, NIS1, SSA1, SSA2, SSB1, SSC1, SHM1, SIP5 and TCO89. Interacts with NBA1. Interacts with histone H3/H4 heterodimers. Phosphorylation by CK2 is required for normal progression through S phase. CK2 phosphorylation is not required for correct bud formation nor histone binding.

It localises to the cytoplasm. It is found in the nucleus. The protein resides in the bud neck. In terms of biological role, acidic protein, which assembles histones into an octamer (in vitro). Involved in the regulation of the localization and the function of the septins during mitosis. Involved in the function of B-type cyclins. This is Nucleosome assembly protein from Saccharomyces cerevisiae (strain ATCC 204508 / S288c) (Baker's yeast).